The chain runs to 813 residues: DNA gyrase subunit A (813 aa).

The region spanning 38–504 is the Topo IIA-type catalytic domain; that stretch reads LPDVRDGLKP…EIEYLDVEDF (467 aa). Catalysis depends on Y126, which acts as the O-(5'-phospho-DNA)-tyrosine intermediate. The GyrA-box signature appears at 531-537; sequence QNRGGKG.

Belongs to the type II topoisomerase GyrA/ParC subunit family. In terms of assembly, heterotetramer, composed of two GyrA and two GyrB chains. In the heterotetramer, GyrA contains the active site tyrosine that forms a transient covalent intermediate with DNA, while GyrB binds cofactors and catalyzes ATP hydrolysis.

It is found in the cytoplasm. The enzyme catalyses ATP-dependent breakage, passage and rejoining of double-stranded DNA.. Functionally, a type II topoisomerase that negatively supercoils closed circular double-stranded (ds) DNA in an ATP-dependent manner to modulate DNA topology and maintain chromosomes in an underwound state. Negative supercoiling favors strand separation, and DNA replication, transcription, recombination and repair, all of which involve strand separation. Also able to catalyze the interconversion of other topological isomers of dsDNA rings, including catenanes and knotted rings. Type II topoisomerases break and join 2 DNA strands simultaneously in an ATP-dependent manner. This is DNA gyrase subunit A from Treponema pallidum (strain Nichols).